A 348-amino-acid chain; its full sequence is GMP reductase (348 aa).

108-131 (ADFQKTKDVMALSDELIFICIDIA) is a binding site for NADP(+). K(+) contacts are provided by glycine 181 and glycine 183. Cysteine 186 functions as the Thioimidate intermediate in the catalytic mechanism. 216-239 (IIGDGGCACAGDVAKAFGGGADFV) provides a ligand contact to NADP(+).

The protein belongs to the IMPDH/GMPR family. GuaC type 1 subfamily. As to quaternary structure, homotetramer.

It carries out the reaction IMP + NH4(+) + NADP(+) = GMP + NADPH + 2 H(+). In terms of biological role, catalyzes the irreversible NADPH-dependent deamination of GMP to IMP. It functions in the conversion of nucleobase, nucleoside and nucleotide derivatives of G to A nucleotides, and in maintaining the intracellular balance of A and G nucleotides. The sequence is that of GMP reductase from Vibrio vulnificus (strain CMCP6).